Reading from the N-terminus, the 491-residue chain is LETM1 domain-containing protein LETM2, mitochondrial (491 aa).

Residues 1 to 25 (MAFYSYNSVLAIARTRFPSHFVHPT) constitute a mitochondrion transit peptide. Topologically, residues 26-177 (CSSYSPSCAF…LLRTCVDFFR (152 aa)) are mitochondrial intermembrane. The span at 94–109 (EQATKHPQVTSPQATK) shows a compositional bias: polar residues. A disordered region spans residues 94-115 (EQATKHPQVTSPQATKETGMEI). The helical transmembrane segment at 178-198 (LVPFMVFLIVPFMEFLLPVFL) threads the bilayer. At 199–491 (KLFPEMLPST…QNSKASSKGA (293 aa)) the chain is on the mitochondrial matrix side. Positions 208-235 (TFESESKKEEKQKKKMAVKLELAKFLQE) form a coiled coil. Positions 221–438 (KKMAVKLELA…LAPQLKGTKD (218 aa)) constitute a Letm1 RBD domain. The segment at 435 to 491 (GTKDEDFIQPPPVTSSPITPSTPISLPKGPITSSEEPTLQAKSQMTAQNSKASSKGA) is disordered. Positions 449–461 (SSPITPSTPISLP) are enriched in low complexity. A compositionally biased stretch (polar residues) spans 465-491 (ITSSEEPTLQAKSQMTAQNSKASSKGA).

Its subcellular location is the mitochondrion inner membrane. This chain is LETM1 domain-containing protein LETM2, mitochondrial (LETM2), found in Homo sapiens (Human).